We begin with the raw amino-acid sequence, 157 residues long: Endoribonuclease YbeY (157 aa).

3 residues coordinate Zn(2+): histidine 111, histidine 115, and histidine 121.

The protein belongs to the endoribonuclease YbeY family. The cofactor is Zn(2+).

Its subcellular location is the cytoplasm. Its function is as follows. Single strand-specific metallo-endoribonuclease involved in late-stage 70S ribosome quality control and in maturation of the 3' terminus of the 16S rRNA. The sequence is that of Endoribonuclease YbeY from Pseudomonas putida (strain ATCC 47054 / DSM 6125 / CFBP 8728 / NCIMB 11950 / KT2440).